The following is a 621-amino-acid chain: Chaperone protein DnaK (621 aa).

Threonine 179 carries the phosphothreonine; by autocatalysis modification. Over residues 583–605 the composition is skewed to polar residues; sequence SQVQDTQGAAQGQSQGNPQQTAD. The tract at residues 583–621 is disordered; sequence SQVQDTQGAAQGQSQGNPQQTADNRGKVVDAEIVDENKE. Basic and acidic residues predominate over residues 606–621; the sequence is NRGKVVDAEIVDENKE.

The protein belongs to the heat shock protein 70 family.

Its function is as follows. Acts as a chaperone. This Endomicrobium trichonymphae protein is Chaperone protein DnaK.